Reading from the N-terminus, the 463-residue chain is L-seryl-tRNA(Sec) selenium transferase (463 aa).

An N6-(pyridoxal phosphate)lysine modification is found at lysine 295.

Belongs to the SelA family. Homodecamer; pentamer of dimers. Binds only one seryl-tRNA(Sec) per dimer. Pyridoxal 5'-phosphate is required as a cofactor.

The protein resides in the cytoplasm. It carries out the reaction L-seryl-tRNA(Sec) + selenophosphate + H(+) = L-selenocysteinyl-tRNA(Sec) + phosphate. It functions in the pathway aminoacyl-tRNA biosynthesis; selenocysteinyl-tRNA(Sec) biosynthesis; selenocysteinyl-tRNA(Sec) from L-seryl-tRNA(Sec) (bacterial route): step 1/1. Functionally, converts seryl-tRNA(Sec) to selenocysteinyl-tRNA(Sec) required for selenoprotein biosynthesis. The protein is L-seryl-tRNA(Sec) selenium transferase of Shigella boydii serotype 18 (strain CDC 3083-94 / BS512).